We begin with the raw amino-acid sequence, 469 residues long: ABHD16B (469 aa).

Residues 174–298 (VICCEGNAGF…GLVVRTVREH (125 aa)) form the AB hydrolase-1 domain. Active-site charge relay system residues include S247, D322, and H418.

The protein belongs to the AB hydrolase superfamily. ABHD16 family.

The enzyme catalyses a 1,2-diacyl-sn-glycero-3-phospho-L-serine + H2O = a 2-acyl-sn-glycero-3-phospho-L-serine + a fatty acid + H(+). It catalyses the reaction a 1-acylglycerol + H2O = glycerol + a fatty acid + H(+). It carries out the reaction 1-(9Z-octadecenoyl)-glycerol + H2O = glycerol + (9Z)-octadecenoate + H(+). Functionally, hydrolyzes the sn-1 position of glycerophospholipids with high specificity towards phosphatidylserine (PS), PS-PLA1 enzyme. Also hydrolyzes the acyl chain of glycerolipids with a preference for the monoacylglycerol (MAG) 1-acylglycerol, MAG lipase. Plays a regulatory role in cellular lipid homeostasis by modulating genes involved in neutral lipid degradation and in phospholipid synthesis and composition. The chain is ABHD16B from Homo sapiens (Human).